The sequence spans 356 residues: S-adenosylmethionine:tRNA ribosyltransferase-isomerase (356 aa).

The protein belongs to the QueA family. In terms of assembly, monomer.

It is found in the cytoplasm. The enzyme catalyses 7-aminomethyl-7-carbaguanosine(34) in tRNA + S-adenosyl-L-methionine = epoxyqueuosine(34) in tRNA + adenine + L-methionine + 2 H(+). Its pathway is tRNA modification; tRNA-queuosine biosynthesis. In terms of biological role, transfers and isomerizes the ribose moiety from AdoMet to the 7-aminomethyl group of 7-deazaguanine (preQ1-tRNA) to give epoxyqueuosine (oQ-tRNA). The protein is S-adenosylmethionine:tRNA ribosyltransferase-isomerase of Histophilus somni (strain 2336) (Haemophilus somnus).